We begin with the raw amino-acid sequence, 201 residues long: Glycerol-3-phosphate acyltransferase (201 aa).

Transmembrane regions (helical) follow at residues 3 to 23 (TVLFALGAYLIGSISFAVVVS), 51 to 71 (KAAILTLLGDGAKGFLAVWLV), 85 to 105 (VALVAIAVFLGHLWPVFFRFV), 116 to 136 (VLLALNGWLGLATLVTWLVIA), 137 to 157 (YAFRYSSLAALIAAIFAPFYY), and 158 to 178 (GLLFGPDVILLAVLAMSILLV).

This sequence belongs to the PlsY family. Probably interacts with PlsX.

Its subcellular location is the cell inner membrane. The catalysed reaction is an acyl phosphate + sn-glycerol 3-phosphate = a 1-acyl-sn-glycero-3-phosphate + phosphate. Its pathway is lipid metabolism; phospholipid metabolism. Catalyzes the transfer of an acyl group from acyl-phosphate (acyl-PO(4)) to glycerol-3-phosphate (G3P) to form lysophosphatidic acid (LPA). This enzyme utilizes acyl-phosphate as fatty acyl donor, but not acyl-CoA or acyl-ACP. The protein is Glycerol-3-phosphate acyltransferase of Janthinobacterium sp. (strain Marseille) (Minibacterium massiliensis).